A 209-amino-acid chain; its full sequence is MGSVSNQQFAGGCAKAAEEAPEEAPEDAARAADEPQLLHGAGICKWFNVRMGFGFLSMTARAGVALDPPVDVFVHQSKLHMEGFRSLKEGEAVEFTFKKSAKGLESIRVTGPGGVFCIGSERRPKGKSMQKRRSKGDRCYNCGGLDHHAKECKLPPQPKKCHFCQSISHMVASCPLKAQQGPSAQGKPTYFREEEEEIHSPTLLPEAQN.

The tract at residues 1–31 is disordered; the sequence is MGSVSNQQFAGGCAKAAEEAPEEAPEDAARA. N-acetylglycine is present on G2. Phosphoserine is present on S3. The region spanning 39–112 is the CSD domain; the sequence is HGAGICKWFN…GLESIRVTGP (74 aa). The flexible linker stretch occupies residues 113-136; that stretch reads GGVFCIGSERRPKGKSMQKRRSKG. The residue at position 120 (S120) is a Phosphoserine. 2 consecutive CCHC-type zinc fingers follow at residues 137–154 and 159–176; these read DRCYNCGGLDHHAKECKL and KKCHFCQSISHMVASCPL. Residues 178–209 are disordered; it reads AQQGPSAQGKPTYFREEEEEIHSPTLLPEAQN. S200 is subject to Phosphoserine.

The protein belongs to the lin-28 family. As to quaternary structure, monomer. During skeletal muscle differentiation, associated with translation initiation complexes in the polysomal compartment. Directly interacts with EIF3S2. Interacts with NCL in an RNA-dependent manner. Interacts (via C-terminus) with DHX9 (via N- and C-terminus); this interaction occurs in a RNA-independent manner. Interacts with TUT4 in the presence of pre-let-7 RNA. In terms of tissue distribution, expressed in embryonic stem cells, placenta and testis. Tends to be up-regulated in HER2-overexpressing breast tumors.

Its subcellular location is the cytoplasm. The protein resides in the rough endoplasmic reticulum. It is found in the P-body. The protein localises to the stress granule. It localises to the nucleus. Its subcellular location is the nucleolus. In terms of biological role, RNA-binding protein that inhibits processing of pre-let-7 miRNAs and regulates translation of mRNAs that control developmental timing, pluripotency and metabolism. Seems to recognize a common structural G-quartet (G4) feature in its miRNA and mRNA targets. 'Translational enhancer' that drives specific mRNAs to polysomes and increases the efficiency of protein synthesis. Its association with the translational machinery and target mRNAs results in an increased number of initiation events per molecule of mRNA and, indirectly, in mRNA stabilization. Binds IGF2 mRNA, MYOD1 mRNA, ARBP/36B4 ribosomal protein mRNA and its own mRNA. Essential for skeletal muscle differentiation program through the translational up-regulation of IGF2 expression. Suppressor of microRNA (miRNA) biogenesis, including that of let-7, miR107, miR-143 and miR-200c. Specifically binds the miRNA precursors (pre-miRNAs), recognizing an 5'-GGAG-3' motif found in pre-miRNA terminal loop, and recruits TUT4 and TUT7 uridylyltransferases. This results in the terminal uridylation of target pre-miRNAs. Uridylated pre-miRNAs fail to be processed by Dicer and undergo degradation. The repression of let-7 expression is required for normal development and contributes to maintain the pluripotent state by preventing let-7-mediated differentiation of embryonic stem cells. Localized to the periendoplasmic reticulum area, binds to a large number of spliced mRNAs and inhibits the translation of mRNAs destined for the ER, reducing the synthesis of transmembrane proteins, ER or Golgi lumen proteins, and secretory proteins. Binds to and enhances the translation of mRNAs for several metabolic enzymes, such as PFKP, PDHA1 or SDHA, increasing glycolysis and oxidative phosphorylation. Which, with the let-7 repression may enhance tissue repair in adult tissue. In Homo sapiens (Human), this protein is Protein lin-28 homolog A (LIN28A).